The following is a 131-amino-acid chain: Transcription antitermination protein NusB (131 aa).

This sequence belongs to the NusB family.

Involved in transcription antitermination. Required for transcription of ribosomal RNA (rRNA) genes. Binds specifically to the boxA antiterminator sequence of the ribosomal RNA (rrn) operons. This is Transcription antitermination protein NusB from Campylobacter fetus subsp. fetus (strain 82-40).